We begin with the raw amino-acid sequence, 526 residues long: Probable feruloyl esterase B-2 (526 aa).

Residues 1–18 (MTKLSLLPLLTLASAVLA) form the signal peptide. 2 disulfide bridges follow: Cys-27–Cys-74 and Cys-62–Cys-113. Residue Asn-52 is glycosylated (N-linked (GlcNAc...) asparagine). Asn-137 carries N-linked (GlcNAc...) asparagine glycosylation. 4 cysteine pairs are disulfide-bonded: Cys-186-Cys-441, Cys-255-Cys-272, Cys-281-Cys-291, and Cys-503-Cys-525. The active-site Acyl-ester intermediate is the Ser-187. Asn-233 carries N-linked (GlcNAc...) asparagine glycosylation. The Ca(2+) site is built by Asp-256, Asp-259, Ala-261, Asp-263, and Ile-265. Asn-311 carries an N-linked (GlcNAc...) asparagine glycan. Catalysis depends on charge relay system residues Asp-400 and His-440. N-linked (GlcNAc...) asparagine glycosylation is present at Asn-516.

The protein belongs to the tannase family.

It localises to the secreted. It catalyses the reaction feruloyl-polysaccharide + H2O = ferulate + polysaccharide.. Involved in degradation of plant cell walls. Hydrolyzes the feruloyl-arabinose ester bond in arabinoxylans as well as the feruloyl-galactose and feruloyl-arabinose ester bonds in pectin. This is Probable feruloyl esterase B-2 (faeB-2) from Aspergillus fumigatus (strain CBS 144.89 / FGSC A1163 / CEA10) (Neosartorya fumigata).